A 35-amino-acid chain; its full sequence is Hemocyanin A chain (35 aa).

It belongs to the tyrosinase family. Hemocyanin subfamily. As to expression, hemolymph.

It localises to the secreted. The protein localises to the extracellular space. Hemocyanins are copper-containing oxygen carriers occurring freely dissolved in the hemolymph of many mollusks and arthropods. This Cherax destructor (Common yabby crayfish) protein is Hemocyanin A chain.